The primary structure comprises 131 residues: Prefoldin subunit beta (131 aa).

Disordered stretches follow at residues 19–41 and 112–131; these read LQET…RESE and LQGG…AGGA. Residues 20-35 are compositionally biased toward low complexity; it reads QETAQQVAQQKQQAET. Gly residues predominate over residues 114 to 131; it reads GGAGGGPMGPGGPGAGGA.

It belongs to the prefoldin subunit beta family. In terms of assembly, heterohexamer of two alpha and four beta subunits.

The protein resides in the cytoplasm. Molecular chaperone capable of stabilizing a range of proteins. Seems to fulfill an ATP-independent, HSP70-like function in archaeal de novo protein folding. This is Prefoldin subunit beta from Natronomonas pharaonis (strain ATCC 35678 / DSM 2160 / CIP 103997 / JCM 8858 / NBRC 14720 / NCIMB 2260 / Gabara) (Halobacterium pharaonis).